We begin with the raw amino-acid sequence, 170 residues long: ATP synthase subunit b (170 aa).

Residues 11-31 (AFTFGDAFFTLFAFAILLVLI) form a helical membrane-spanning segment.

This sequence belongs to the ATPase B chain family. F-type ATPases have 2 components, F(1) - the catalytic core - and F(0) - the membrane proton channel. F(1) has five subunits: alpha(3), beta(3), gamma(1), delta(1), epsilon(1). F(0) has three main subunits: a(1), b(2) and c(10-14). The alpha and beta chains form an alternating ring which encloses part of the gamma chain. F(1) is attached to F(0) by a central stalk formed by the gamma and epsilon chains, while a peripheral stalk is formed by the delta and b chains.

The protein localises to the cell membrane. Its function is as follows. F(1)F(0) ATP synthase produces ATP from ADP in the presence of a proton or sodium gradient. F-type ATPases consist of two structural domains, F(1) containing the extramembraneous catalytic core and F(0) containing the membrane proton channel, linked together by a central stalk and a peripheral stalk. During catalysis, ATP synthesis in the catalytic domain of F(1) is coupled via a rotary mechanism of the central stalk subunits to proton translocation. In terms of biological role, component of the F(0) channel, it forms part of the peripheral stalk, linking F(1) to F(0). This chain is ATP synthase subunit b, found in Listeria innocua serovar 6a (strain ATCC BAA-680 / CLIP 11262).